Consider the following 625-residue polypeptide: Phosphomethylpyrimidine synthase (625 aa).

Substrate is bound by residues N230, M259, Y288, H324, 344–346 (SRG), 385–388 (DGLR), and E424. H428 is a binding site for Zn(2+). Substrate is bound at residue Y451. Residue H492 coordinates Zn(2+). [4Fe-4S] cluster-binding residues include C572, C575, and C580.

This sequence belongs to the ThiC family. As to quaternary structure, homodimer. It depends on [4Fe-4S] cluster as a cofactor.

The enzyme catalyses 5-amino-1-(5-phospho-beta-D-ribosyl)imidazole + S-adenosyl-L-methionine = 4-amino-2-methyl-5-(phosphooxymethyl)pyrimidine + CO + 5'-deoxyadenosine + formate + L-methionine + 3 H(+). The protein operates within cofactor biosynthesis; thiamine diphosphate biosynthesis. Its function is as follows. Catalyzes the synthesis of the hydroxymethylpyrimidine phosphate (HMP-P) moiety of thiamine from aminoimidazole ribotide (AIR) in a radical S-adenosyl-L-methionine (SAM)-dependent reaction. The sequence is that of Phosphomethylpyrimidine synthase from Xanthomonas euvesicatoria pv. vesicatoria (strain 85-10) (Xanthomonas campestris pv. vesicatoria).